The sequence spans 898 residues: Netrin receptor UNC5A (898 aa).

Residues 1–25 (MAVRPGLWPALLGIVLTAWLRGSGA) form the signal peptide. Topologically, residues 26–361 (QQSATVANPV…TSSGPEDVAL (336 aa)) are extracellular. The Ig-like domain maps to 44–141 (PHFLVEPEDV…SGTTKSQKAY (98 aa)). Disulfide bonds link C65/C126, C77/C124, and C170/C221. Residues N107 and N218 are each glycosylated (N-linked (GlcNAc...) asparagine). The Ig-like C2-type domain maps to 155-234 (PLAKEVSLEQ…NIVARRRSAS (80 aa)). TSP type-1 domains follow at residues 242–296 (NGGW…TLCP) and 298–350 (DGSW…DLCL). W245, W248, and W251 each carry a C-linked (Man) tryptophan glycan. 3 cysteine pairs are disulfide-bonded: C254–C291, C258–C295, and C269–C281. Residues W301 and W304 are each glycosylated (C-linked (Man) tryptophan). 3 cysteine pairs are disulfide-bonded: C310/C344, C314/C349, and C322/C334. Residue N343 is glycosylated (N-linked (GlcNAc...) asparagine). The helical transmembrane segment at 362-382 (YIGLVAVAVCLILLLLVLVLI) threads the bilayer. Residues 383–898 (YCRKKEGLDS…GLFTVSEAEC (516 aa)) lie on the Cytoplasmic side of the membrane. The 144-residue stretch at 497 to 640 (NMAYGTFNFL…LGRFALVGEA (144 aa)) folds into the ZU5 domain. The interaction with DCC stretch occupies residues 661–679 (SLEYNIRVYCLHDTHDALK). Residues 817–897 (QKIITSLDPP…AGLFTVSEAE (81 aa)) enclose the Death domain.

This sequence belongs to the unc-5 family. As to quaternary structure, homodimer and homooligomer. Interacts with the cytoplasmic part of DCC. Interacts with MAGED1. Interacts with PRKCABP, possibly mediating some interaction with PKC. Interacts (via extracellular domain) with FLRT2 (via extracellular domain). Interacts (via extracellular domain) with FLRT3 (via extracellular domain). In terms of processing, phosphorylated on cytoplasmic tyrosine residues. Phosphorylated by PKC in vitro. Post-translationally, proteolytically cleaved by caspases during apoptosis. The cleavage does not take place when the receptor is associated with netrin ligand. Its cleavage by caspases is required to induce apoptosis. The two extracellular TSRs of UNC5A contain WxxWxxWxxC motifs that can be C-mannosylated on all tryptophans. DPY19L1 preferentially mannosylates the first two tryptophans and DPY19L3 prefers the third. C-mannosylation by DPY19L1 is required for transport of UNC5A from the endoplasmic reticulum to the cell surface. Restricted to central nervous system.

Its subcellular location is the cell membrane. The protein localises to the membrane raft. It is found in the cell projection. It localises to the neuron projection. In terms of biological role, receptor for netrin required for axon guidance. Functions in the netrin signaling pathway and promotes neurite outgrowth in response to NTN1. Mediates axon repulsion of neuronal growth cones in the developing nervous system in response to netrin. Axon repulsion in growth cones may be mediated by its association with DCC that may trigger signaling for repulsion. It also acts as a dependence receptor required for apoptosis induction when not associated with netrin ligand. This chain is Netrin receptor UNC5A (Unc5a), found in Mus musculus (Mouse).